Reading from the N-terminus, the 360-residue chain is Dual-specificity RNA methyltransferase RlmN (360 aa).

The Proton acceptor role is filled by Glu-93. A Radical SAM core domain is found at 99–326 (EEDRNTLCIS…VITRSSRGAD (228 aa)). Cysteines 106 and 331 form a disulfide. Positions 113, 117, and 120 each coordinate [4Fe-4S] cluster. S-adenosyl-L-methionine-binding positions include 158 to 159 (GE), Ser-190, 212 to 214 (SLN), and Asn-288. Cys-331 serves as the catalytic S-methylcysteine intermediate.

The protein belongs to the radical SAM superfamily. RlmN family. The cofactor is [4Fe-4S] cluster.

The protein localises to the cytoplasm. The enzyme catalyses adenosine(2503) in 23S rRNA + 2 reduced [2Fe-2S]-[ferredoxin] + 2 S-adenosyl-L-methionine = 2-methyladenosine(2503) in 23S rRNA + 5'-deoxyadenosine + L-methionine + 2 oxidized [2Fe-2S]-[ferredoxin] + S-adenosyl-L-homocysteine. It catalyses the reaction adenosine(37) in tRNA + 2 reduced [2Fe-2S]-[ferredoxin] + 2 S-adenosyl-L-methionine = 2-methyladenosine(37) in tRNA + 5'-deoxyadenosine + L-methionine + 2 oxidized [2Fe-2S]-[ferredoxin] + S-adenosyl-L-homocysteine. Specifically methylates position 2 of adenine 2503 in 23S rRNA and position 2 of adenine 37 in tRNAs. m2A2503 modification seems to play a crucial role in the proofreading step occurring at the peptidyl transferase center and thus would serve to optimize ribosomal fidelity. In Geobacter sulfurreducens (strain ATCC 51573 / DSM 12127 / PCA), this protein is Dual-specificity RNA methyltransferase RlmN.